The following is a 1118-amino-acid chain: cGMP-specific 3',5'-cyclic phosphodiesterase (1118 aa).

The disordered stretch occupies residues 1–142 (MTDVSSPAGG…KASTTASQQD (142 aa)). Residues 18-33 (STTSSSSAATTSASSS) are compositionally biased toward low complexity. Residues 34 to 45 (KPLTNGANKTAI) are compositionally biased toward polar residues. 2 stretches are compositionally biased toward low complexity: residues 46-56 (STAAGGVTPGA) and 63-72 (GAIPASSSSG). Positions 84-101 (SNNNRPAVTNRSSETKLM) are enriched in polar residues. Residues 102-128 (TPTGSSSSPSQSPSQTQASIQTQTSQQ) show a composition bias toward low complexity. 2 GAF domains span residues 247 to 399 (DIDV…GIGI) and 431 to 612 (NLEC…GLGI). Positions 642 to 965 (SQDQTEKLTQ…RNWQDLAEKV (324 aa)) constitute a PDEase domain. Residue histidine 718 is the Proton donor of the active site. Residues histidine 722, histidine 758, aspartate 759, and aspartate 869 each coordinate a divalent metal cation. Disordered stretches follow at residues 1006–1035 (QQSQ…TGAL) and 1065–1118 (SHVS…CALL). Composition is skewed to basic and acidic residues over residues 1011–1022 (GSEDSHTPEHQR) and 1065–1075 (SHVSEDMDDKS). Residues 1084-1104 (ASGSMGRMSASSSTSSAGGQM) show a composition bias toward low complexity. Over residues 1108-1118 (SKKRSKLCALL) the composition is skewed to basic residues. Cysteine 1115 bears the Cysteine methyl ester mark. Residue cysteine 1115 is the site of S-farnesyl cysteine attachment. A propeptide spans 1116–1118 (ALL) (removed in mature form).

The protein belongs to the cyclic nucleotide phosphodiesterase family. In terms of assembly, interacts with PrBP. The cofactor is a divalent metal cation. In terms of tissue distribution, expressed in Malpighian tubule principal cells. Also expressed in adult head.

The protein resides in the cell membrane. It carries out the reaction 3',5'-cyclic GMP + H2O = GMP + H(+). Its activity is regulated as follows. Inhibited by sildenafil and zaprinast. Its function is as follows. Hydrolyzes the second messenger cGMP, which is a key regulator of many important physiological processes. Has cAMP phosphodiesterase activity in vitro but not in vivo. Has a role regulating cGMP transport in Malpighian tubule principal cells. The chain is cGMP-specific 3',5'-cyclic phosphodiesterase (Pde6) from Drosophila melanogaster (Fruit fly).